Reading from the N-terminus, the 285-residue chain is MTTTDRIAAAFARVSEAGRAAALIPYIAAGDPSPQATVPLMHALVRAGADLVELGVPFSDPMADGPVVQRAAERAIAQGVGLRRVLELVADFRRDDSVTPVVLMGYANPIERMGQRAFAQAAQAAGVDGVLVVDYPPEEVDEFAAMLAEAGVAPIFLLAPTSTEARIEAIGRVARGYVYYVSLKGVTGAGSLDTDDVARKLALIRRHVHIPVGVGFGIRDAASAQRIAAHADAVVIGSKLIETMEQTGAQAGADQKNEAAIAAAQQWLHTIRLALDDVKRENAPA.

Active-site proton acceptor residues include Glu53 and Asp64.

Belongs to the TrpA family. As to quaternary structure, tetramer of two alpha and two beta chains.

It carries out the reaction (1S,2R)-1-C-(indol-3-yl)glycerol 3-phosphate + L-serine = D-glyceraldehyde 3-phosphate + L-tryptophan + H2O. It functions in the pathway amino-acid biosynthesis; L-tryptophan biosynthesis; L-tryptophan from chorismate: step 5/5. Its function is as follows. The alpha subunit is responsible for the aldol cleavage of indoleglycerol phosphate to indole and glyceraldehyde 3-phosphate. In Bordetella parapertussis (strain 12822 / ATCC BAA-587 / NCTC 13253), this protein is Tryptophan synthase alpha chain.